Reading from the N-terminus, the 241-residue chain is Cysteine-rich secretory protein 3 (241 aa).

The N-terminal stretch at 1–19 (MALMLVLFFLAAVLPPSLL) is a signal peptide. In terms of domain architecture, SCP spans 44 to 170 (SKHNQLRRKV…PLRYFYVCRY (127 aa)). N-linked (GlcNAc...) asparagine glycosylation is found at N118, N132, and N175. 5 cysteine pairs are disulfide-bonded: C194–C201, C197–C206, C210–C241, C219–C235, and C226–C239. A ShKT domain is found at 210–241 (CQYKDMSFWCKRLEYVCKHPGLKKRCLATCQC).

Belongs to the CRISP family. As to quaternary structure, interacts with A1BG. Interacts with KNG1 isoform LMW. Expressed in submandibular gland.

It localises to the cytoplasmic vesicle. Its subcellular location is the secretory vesicle. In terms of biological role, this protein is supposed to help spermatozoa undergo functional maturation while they move from the testis to the ductus deferens. This Mus musculus (Mouse) protein is Cysteine-rich secretory protein 3 (Crisp3).